A 178-amino-acid chain; its full sequence is Large ribosomal subunit protein uL6 (178 aa).

Belongs to the universal ribosomal protein uL6 family. Part of the 50S ribosomal subunit.

This protein binds to the 23S rRNA, and is important in its secondary structure. It is located near the subunit interface in the base of the L7/L12 stalk, and near the tRNA binding site of the peptidyltransferase center. The chain is Large ribosomal subunit protein uL6 from Clavibacter sepedonicus (Clavibacter michiganensis subsp. sepedonicus).